The primary structure comprises 64 residues: Lectin-A (64 aa).

2 consecutive Chitin-binding type-1 domains span residues 1 to 20 (APEC…QVVT) and 22 to 45 (DFDD…NTDA).

In terms of processing, glycosylated.

In terms of biological role, N-acetyl-D-glucosamine binding lectin. Shows low hemagglutinating activity towards human erythrocytes. Has low mitogenic activity towards human peripheral blood lymphocytes. The chain is Lectin-A from Phytolacca americana (American pokeweed).